The sequence spans 458 residues: 3-isopropylmalate dehydratase large subunit (458 aa).

3 residues coordinate [4Fe-4S] cluster: cysteine 339, cysteine 399, and cysteine 402.

This sequence belongs to the aconitase/IPM isomerase family. LeuC type 1 subfamily. In terms of assembly, heterodimer of LeuC and LeuD. [4Fe-4S] cluster serves as cofactor.

It carries out the reaction (2R,3S)-3-isopropylmalate = (2S)-2-isopropylmalate. It participates in amino-acid biosynthesis; L-leucine biosynthesis; L-leucine from 3-methyl-2-oxobutanoate: step 2/4. Functionally, catalyzes the isomerization between 2-isopropylmalate and 3-isopropylmalate, via the formation of 2-isopropylmaleate. The sequence is that of 3-isopropylmalate dehydratase large subunit from Lactococcus lactis subsp. cremoris (strain SK11).